Here is a 2475-residue protein sequence, read N- to C-terminus: MGSLGDLPLNRISVLFGSKYSEIDRSALHIRRYLSTHRAATWLEGAVEDLPSVWQDVTKVWPAGEGIHGEARLQQLSAFLRGEGLPSNMEDPMNYLLMPITVLRHLVDFHEFKEAGVNCDIKSMQGFCAGYLAAVAACWEKDQSEFSKVVATMVRTAIFIGAAVDLDELATQRATSIAVRWKTAEAYKPFAATLGRYPGAYMACITDESSVTVTVWEDQAAALVQELERNGLLVKDTRLRGRFHHADHLSAAQDILKLCQQDSRFQLPDTCPAEELPRSNADGDLPTLKSLLSAAIQSILITQADWNLTVSNTLNSLDSSDAKCILSIGAGQFLPRQARSQILNITDSSRGDNLVNGDHDSMTITNGASFVADSINGTAPVPTSIPIAVTGLACRYPQADCVEELWKILEQGLCTVSRMPESRLKPDRLQRKPDGPFWGNFISRPDAFDHRFFKISAREAESMDPQQRLLLQVAYEAMESAGYCGLRATNLPEDVGCYVGVGTEDYSENVGSRNATAFSATGTLQAFNSGRVSHHFGWTGPSVTVDTACSSAAVAIHLACQALQTSDCSVAVAGGVNVMTDPRWSQNLAAASFLSPTGASKAFDANANGYCRGEGAGLVILRPLEAALRDGDPIHAVITGTSVNQGANCSPITVPDSNSQRSLYMKALSLSGLKPEVVSYVEAHGTGTQVGDPIEFESIRKTFAVPSRTERLYVGSIKDNIGHTETSSGVAGLLKTILMLQKGKIPKQANFTQLNPKITVNQEDKMSIPTSSILWKTQKRVAMVTNYGAAGSNAAIVLKEPISTPRALCSDEKERLPSVVPFFVAAQTDESLRAYCQTLKASLLNGAHLESIAVQDLAFNLARKQNRSMEFSVSFTNSSSLTELHDRLDDVISGRMNIEKKTHTSNPVVLCFGGQTGNKASISESLVASSALLRLHLDECESACKALGLPSLFPAIFDSSPNNDIVNLHCVLFSIQYATAKAWIDSGLKVDRMIGHSFGQLTAVCVAGGLSLIDTMQLISTRAHLIRSEWTSEIGVMLSLKGEKNAVRELLDSVPESADLACVNGADSFVAAGSEVAIHEIQKNAAERGIKSQRLDNTHAFHSRLVDPILPGLAKVASTLNYKPLRIPVEACSESEDDWLLPTWEKIVQHSRKPVYFHQAVHRTISRIQGPAIWLEAGTMSPIIGMVRRAVDTPSSVQGHVFCPMDLSGPQAESNLAKITSSLWSNGVPVQFWPFHSSQRGYQWINLPPYQFAKTSHWIEYDPTAFSYQISKHEEPLTEGLKLVQLLKNEGKVSLFRINDNDPMFRMCTAGHAVVEQNLCPASLYFELVARAATTTLPKGTDPTMYHLADLNISAPLVLDMPGSVLLELTQRDSTPGQWAFVLFTREDTLQSVTHATGTISLSPGANNTGISSRFSSLKRLLNPAHWDSIATSPSSSGLKRSTVYQAFRRAVTYAEYYRGVESVYALGHEATGRVNLPSSPTKNSPCDPILIDNFIQVAGIHVNCLSETHDDEVFVCSSVGDVIIGESFVKRDPSVATPWVVYSNYEQESRKKALCDVFVVDEATGSLALCVLAATFTSVSIQSLRRTLTRLTNKGVSPVPVDIAVAAEVAPAVPAASLITATRASSNGDDLRTVQAMLSELLGIPASEIPASASLADVGVDSLMNTEVLSEIKNRFQVVITKSELTAIEDVGALVQRIFPGRSTVHIETHAQPAVGITAINGGSKPSSRGSVPASRVGDDLSGFADKAGELFTASRKSNEHSKATQFLGFCDTVFPQQMELVTAYVVEAFKALGVDLQSLNAGQPIPSVDILPQHSQVMNQLYAVLEYSGLIERSGTSFCRGHCEVNQNATPVLHQRILNDHPHHTSEHKLLHTTGPRLADCLTGAADPLSLLFQDAQARALMQDVYSNAPMFKSATMHLAQYLKNLLSQVNSPRPIKILEIGAGTGGTTDYLLKQLSSVAGLCFEYTFTDISPSLVTLARKRFKTFNSIHYQTLDIEKGPTSEMLGQYDIIVSSNCIHATRSLSTSCSNIQKLLRPQGILCLIELTRNLFWFDLVFGLLEGWWLFNDGRSHALAHESFWDRTLRSSGFNWVDWTDNQSEESNILRLIVASPTRPALSLEATMESSDIHEETVVYGRKDDLDLLADIYYPQILDSDGKSRPVALLIHGGGHIMLSRKDVRHTQVQLLIDMGFLPVSIDYRLCPEVSLLEGPMADACEALAWAQSTLPQLNLQRPDIRPDGNNVVAVGWSSGGHLAMTLAWTAPARGLRAPSAVLSFYCATDYTDPFWTKPNFPYQGDVSIEDVPTQSPFLGLNDRAITSYNPAPSKRALGGWMSPSDPRSMIALHMNWTGQTLSVLFNGHKYKSLVAIAGGDDNVILPKPTLSEIQKACPLSHVCAGRYKSPTFIIHGTLDDLIPVEQSQRTHDQMLANGVESELRVVADAPHLFDMSPNLKNNKDAFRAVADGYEFLRSHVRL.

Residues 14–253 (VLFGSKYSEI…HHADHLSAAQ (240 aa)) form an N-terminal acylcarrier protein transacylase domain (SAT) region. In terms of domain architecture, Ketosynthase family 3 (KS3) spans 384–800 (SIPIAVTGLA…GSNAAIVLKE (417 aa)). Residues Cys549, His684, and His723 each act as for beta-ketoacyl synthase activity in the active site. Residues 910–1212 (LCFGGQTGNK…CPMDLSGPQA (303 aa)) are malonyl-CoA:ACP transacylase (MAT) domain. Catalysis depends on Ser997, which acts as the For acyl/malonyl transferase activity. An N-terminal hotdog fold region spans residues 1279–1407 (EGLKLVQLLK…GTISLSPGAN (129 aa)). The region spanning 1279–1586 (EGLKLVQLLK…FTSVSIQSLR (308 aa)) is the PKS/mFAS DH domain. Positions 1282–1585 (KLVQLLKNEG…TFTSVSIQSL (304 aa)) are product template (PT) domain. The Proton acceptor; for dehydratase activity role is filled by His1312. A C-terminal hotdog fold region spans residues 1435-1586 (SSSGLKRSTV…FTSVSIQSLR (152 aa)). Asp1493 acts as the Proton donor; for dehydratase activity in catalysis. In terms of domain architecture, Carrier spans 1626–1703 (SSNGDDLRTV…ALVQRIFPGR (78 aa)). Residue Ser1663 is modified to O-(pantetheine 4'-phosphoryl)serine. The tract at residues 1865 to 2098 (HHTSEHKLLH…GFNWVDWTDN (234 aa)) is methyltransferase (CMeT) domain. The tract at residues 2127–2475 (SDIHEETVVY…YEFLRSHVRL (349 aa)) is thioesterase (TE) domain. Active-site for thioesterase activity residues include Ser2250 and Asp2412.

The catalysed reaction is 3 malonyl-CoA + acetyl-CoA + 2 S-adenosyl-L-methionine = 3,5-dimethylorsellinate + 2 S-adenosyl-L-homocysteine + 3 CO2 + 4 CoA. It participates in secondary metabolite biosynthesis; terpenoid biosynthesis. Functionally, non-reducing polyketide synthase; part of the gene cluster that mediates the biosynthesis of paraherquonin, a meroterpenoid with a unique, highly congested hexacyclic molecular architecture. The first step of the pathway is the synthesis of 3,5-dimethylorsellinic acid (DMOA) by the polyketide synthase prhL. Synthesis of DMOA is followed by farnesylation by the prenyltransferase prhE, methylesterification by the methyl-transferase prhM, epoxidation of the prenyl chain by the flavin-dependent monooxygenase prhF, and cyclization of the farnesyl moiety by the terpene cyclase prhH, to yield the tetracyclic intermediate, protoaustinoid A. The short chain dehydrogenase prhI then oxidizes the C-3 alcohol group of the terpene cyclase product to transform protoaustinoid A into protoaustinoid B. The FAD-binding monooxygenase prhJ catalyzes the oxidation of protoaustinoid B into preaustinoid A which is further oxidized into preaustinoid A1 by FAD-binding monooxygenase phrK. Finally, prhA leads to berkeleydione via the berkeleyone B intermediate. PrhA is a multifunctional dioxygenase that first desaturates at C5-C6 to form berkeleyone B, followed by rearrangement of the A/B-ring to form the cycloheptadiene moiety in berkeleydione. Berkeleydione serves as the key intermediate for the biosynthesis of paraherquonin as well as many other meroterpenoids. The cytochrome P450 monooxygenases prhB, prhD, and prhN, as well as the isomerase prhC, are probably involved in the late stage of paraherquonin biosynthesis, after the production of berkeleydione. Especially prhC might be a multifunctional enzyme that catalyzes the D-ring expansion via intramolecular methoxy rearrangement, as well as the hydrolysis of the expanded D-ring. The protein is Non-reducing polyketide synthase prhL of Penicillium brasilianum.